The chain runs to 347 residues: NADH-ubiquinone oxidoreductase chain 2 (347 aa).

A run of 11 helical transmembrane segments spans residues 1-21 (MNPA…MIVT), 25-45 (HWLT…PILM), 59-79 (YFLT…INLV), 96-116 (ITMT…FWVP), 127-147 (GLIL…QISP), 149-169 (INLE…GWGG), 178-198 (IMAY…AYNP), 201-221 (TLLN…MLML), 240-260 (LATT…LSGF), 274-294 (DSII…YFYM), and 326-346 (ISPL…LTLL).

Belongs to the complex I subunit 2 family. As to quaternary structure, core subunit of respiratory chain NADH dehydrogenase (Complex I) which is composed of 45 different subunits. Interacts with TMEM242.

Its subcellular location is the mitochondrion inner membrane. It carries out the reaction a ubiquinone + NADH + 5 H(+)(in) = a ubiquinol + NAD(+) + 4 H(+)(out). Functionally, core subunit of the mitochondrial membrane respiratory chain NADH dehydrogenase (Complex I) which catalyzes electron transfer from NADH through the respiratory chain, using ubiquinone as an electron acceptor. Essential for the catalytic activity and assembly of complex I. The polypeptide is NADH-ubiquinone oxidoreductase chain 2 (Dobsonia minor (Lesser bare-backed fruit bat)).